A 466-amino-acid polypeptide reads, in one-letter code: 3-isopropylmalate dehydratase large subunit (466 aa).

Residues Cys-347, Cys-407, and Cys-410 each coordinate [4Fe-4S] cluster.

Belongs to the aconitase/IPM isomerase family. LeuC type 1 subfamily. As to quaternary structure, heterodimer of LeuC and LeuD. [4Fe-4S] cluster is required as a cofactor.

It carries out the reaction (2R,3S)-3-isopropylmalate = (2S)-2-isopropylmalate. Its pathway is amino-acid biosynthesis; L-leucine biosynthesis; L-leucine from 3-methyl-2-oxobutanoate: step 2/4. In terms of biological role, catalyzes the isomerization between 2-isopropylmalate and 3-isopropylmalate, via the formation of 2-isopropylmaleate. The chain is 3-isopropylmalate dehydratase large subunit from Escherichia fergusonii (strain ATCC 35469 / DSM 13698 / CCUG 18766 / IAM 14443 / JCM 21226 / LMG 7866 / NBRC 102419 / NCTC 12128 / CDC 0568-73).